A 109-amino-acid polypeptide reads, in one-letter code: Thioredoxin (109 aa).

A Thioredoxin domain is found at 2 to 109 (ETLLWKDARE…LVEKIKELFK (108 aa)). A disulfide bridge connects residues Cys-27 and Cys-30.

The protein belongs to the thioredoxin family.

In terms of biological role, participates in various redox reactions through the reversible oxidation of its active center dithiol to a disulfide and catalyzes dithiol-disulfide exchange reactions. The polypeptide is Thioredoxin (trxA) (Mycoplasmopsis pulmonis (strain UAB CTIP) (Mycoplasma pulmonis)).